The following is a 45-amino-acid chain: Large ribosomal subunit protein bL34 (45 aa).

A disordered region spans residues 1 to 27 (MTKRTLGGTSRKRKRVSGFRVRMRSHT). Residues 10–27 (SRKRKRVSGFRVRMRSHT) are compositionally biased toward basic residues.

Belongs to the bacterial ribosomal protein bL34 family.

The protein is Large ribosomal subunit protein bL34 of Synechococcus sp. (strain CC9902).